The sequence spans 482 residues: Succinate-semialdehyde dehydrogenase [NADP(+)] GabD (482 aa).

NADP(+) is bound by residues 156–157, 180–183, and 233–234; these read WN, KPAS, and GS. Glutamate 255 functions as the Proton acceptor in the catalytic mechanism. Residue leucine 256 coordinates NADP(+). Cysteine 289 acts as the Nucleophile in catalysis. NADP(+) is bound at residue glutamate 386.

Belongs to the aldehyde dehydrogenase family. Homotetramer.

It catalyses the reaction succinate semialdehyde + NADP(+) + H2O = succinate + NADPH + 2 H(+). The enzyme catalyses 5-oxopentanoate + NADP(+) + H2O = glutarate + NADPH + 2 H(+). It functions in the pathway amino-acid degradation; 4-aminobutanoate degradation. Its pathway is amino-acid degradation. Functionally, catalyzes the NADP(+)-dependent oxidation of succinate semialdehyde to succinate. Thereby functions in a GABA degradation pathway that allows some E.coli strains to utilize GABA as a nitrogen source for growth. Also catalyzes the conversion of glutarate semialdehyde to glutarate, as part of a L-lysine degradation pathway that proceeds via cadaverine, glutarate and L-2-hydroxyglutarate. This chain is Succinate-semialdehyde dehydrogenase [NADP(+)] GabD (gabD), found in Escherichia coli (strain K12).